A 949-amino-acid polypeptide reads, in one-letter code: MEMICVLFLSLVPAYSRGQGVYAPAQAQIIHAGQACVVKEDNISERVYTIREGDTLVLQCLVTGHPRPQVRWTKTAGSASDKFQETSVLNETLRIEKIQRLQGGRYYCKAENGVGVPAIRSIRVDVQYLDEPVLTVHQTISDVRGSFYQEKTVFLRCTVNSNPPARFIWKRGAETLSHSQDNGVDIYEPLYTQGETKVLKLKNLRPQDYASYTCQVSVRNVCSIPDKSITFQLTNTTAPPALKLSVNETLVVNPGDNVTMQCSLTGGDPQPEVLWSHSPGPLPPNSLVQGGNLTIWRIRVEDSGYYNCTAINNVGNPAKKTVNLLVRSMKNATFQITPDVIKESETIQLGQDLKLSCHVDAVPQEKVVYSWYKNGKPARFSDRLLITRNDPELPPVTCSLEIIDLRFSDYGTYLCVATFQGAPIPDLSVEVNISSETVPPTISVPKGQSTITVREGSRAELQCEVRGKPKPPIIWSRVDKETPMPSGTMTVETYDGKLRLESVSRDMSGTYKCQTARYNGFNIRPREALVQLNVQFPPVVEPAFQDVRQGMGRSVTLRCTMLKGSPMKVATSVWRFNGTLLAQPPAEQQDYSELKVDSVSRETSGSYECSISNDVGVSACLFQVSAKAYSPEFYYDTPNPTLSQKQSKNYSYILQWTQKEPDAVDPILKYRLEVRQLAQRNTIQTFIPVQKMEKGLLLEHILPNLKVPQSYEVRLTPITSFGAGDMAARIIRYMEPINYPSPTDNTCRFEDEKICGFVQDKMDNFDWTRQNALTQNPKRTVNTGPPTDISGTPEGYYMFIEASRPRVTGDKARLISPLYNITAKYYCVSFYYHMYGKHIGSLNLLVRVRNKRAIDTQVWSLSGNRGNMWQQAHVPINPPGPFQIIFEGVRGTSYEGDIAIDDVTLKKGDCPRKPIGPNKAVALPGSGVSAQHGPCLCGPLTFFLYVLLR.

Residues 1-18 (MEMICVLFLSLVPAYSRG) form the signal peptide. Ig-like domains follow at residues 24–125 (PAQA…IRVD) and 132–230 (PVLT…KSIT). 2 N-linked (GlcNAc...) asparagine glycosylation sites follow: N42 and N90. 2 cysteine pairs are disulfide-bonded: C60-C108 and C157-C214. N-linked (GlcNAc...) asparagine glycans are attached at residues N235, N247, N257, N292, N307, and N331. Residues 240-323 (PALKLSVNET…VGNPAKKTVN (84 aa)) form the Ig-like 3 domain. The cysteines at positions 262 and 308 are disulfide-linked. Ig-like domains follow at residues 338–432 (PDVI…VEVN), 440–531 (PTIS…ALVQ), and 537–625 (PPVV…FQVS). C357 and C415 form a disulfide bridge. N-linked (GlcNAc...) asparagine glycosylation occurs at N432. Intrachain disulfides connect C463-C513 and C559-C609. Residues N577, N649, and N820 are each glycosylated (N-linked (GlcNAc...) asparagine). Residues 637–737 (TPNPTLSQKQ…ARIIRYMEPI (101 aa)) form the Fibronectin type-III domain. Residues 745–912 (NTCRFEDEKI…VTLKKGDCPR (168 aa)) enclose the MAM domain. The GPI-anchor amidated serine moiety is linked to residue S926. Positions 927-949 (GVSAQHGPCLCGPLTFFLYVLLR) are cleaved as a propeptide — removed in mature form.

In terms of assembly, interacts heterophilically through its MAM domain with proteins in axon-rich regions and through its Ig-like domains with proteins in differentiating muscle. In terms of tissue distribution, in the embryonic brachial spinal cord, selectively expressed by medial lateral motor column neurons, some populations of dorsal root ganglion neurons, and interneurons.

It is found in the cell membrane. Functionally, required for radial migration of cortical neurons in the superficial layer of the neocortex. This is MAM domain-containing glycosylphosphatidylinositol anchor protein 1 from Gallus gallus (Chicken).